Consider the following 158-residue polypeptide: Cytochrome c2 (158 aa).

Glutamine 1 carries the post-translational modification Pyrrolidone carboxylic acid. The heme c site is built by cysteine 18, cysteine 21, histidine 22, and methionine 102. The segment at 129–158 (AEAAPAADAAAPAAADAAAPAEPAAEGAAT) is disordered.

The protein belongs to the cytochrome c family. In terms of processing, binds 1 heme c group covalently per subunit.

The protein resides in the periplasm. Functionally, cytochrome c2 is found mainly in purple, non-sulfur, photosynthetic bacteria where it functions as the electron donor to the oxidized bacteriochlorophyll in the photophosphorylation pathway. However, it may also have a role in the respiratory chain and is found in some non-photosynthetic bacteria. The polypeptide is Cytochrome c2 (Fuscovulum blasticum (Rhodobacter blasticus)).